A 298-amino-acid polypeptide reads, in one-letter code: Mitochondrial intermembrane space import and assembly protein 40 (298 aa).

The N-terminal 33 residues, 1-33 (MYRTALRPSQSALRAIRSTTSPSALVSSGARRF), are a transit peptide targeting the mitochondrion. The Mitochondrial matrix portion of the chain corresponds to 34–52 (ASTTSAPKKKSTWKGAAVR). Residues 53 to 69 (WGLAVAAVYYYNTSPIF) traverse the membrane as a helical; Signal-anchor for type II membrane protein segment. The Mitochondrial intermembrane segment spans residues 70–298 (SDELPETAGT…TAANNNKKQQ (229 aa)). The tract at residues 101-159 (RQAAEHAAARKAAQAAAKAAATPATPSESVEEQITKAEAEAEAVPEGDSKPRSESTEGV) is disordered. Residues 110 to 121 (RKAAQAAAKAAA) are compositionally biased toward low complexity. Disulfide bonds link C191–C193, C202–C235, and C212–C225. Residues 199-243 (HGPCGEEFKAAFSCFVYSTEEPKGMDCIEKFSHMQDCFRKYPEVY) form the CHCH domain. 2 consecutive short sequence motifs (cx9C motif) follow at residues 202–212 (CGEEFKAAFSC) and 225–235 (CIEKFSHMQDC). Positions 248-298 (ADDEEAERASAAAPAAEGTPAKEEPVENKKEEALEPATHDATAANNNKKQQ) are disordered. Low complexity predominate over residues 256–266 (ASAAAPAAEGT). Residues 267 to 280 (PAKEEPVENKKEEA) show a composition bias toward basic and acidic residues.

Monomer. The cofactor is Cu(2+). Zn(2+) serves as cofactor.

Its subcellular location is the mitochondrion inner membrane. In terms of biological role, required for the import and folding of small cysteine-containing proteins (small Tim) in the mitochondrial intermembrane space (IMS). Forms a redox cycle with ERV1 that involves a disulfide relay system. Precursor proteins to be imported into the IMS are translocated in their reduced form into the mitochondria. The oxidized form of MIA40 forms a transient intermolecular disulfide bridge with the reduced precursor protein, resulting in oxidation of the precursor protein that now contains an intramolecular disulfide bond and is able to undergo folding in the IMS. In Neurospora crassa (strain ATCC 24698 / 74-OR23-1A / CBS 708.71 / DSM 1257 / FGSC 987), this protein is Mitochondrial intermembrane space import and assembly protein 40 (mia-40).